Consider the following 257-residue polypeptide: Photosystem I chlorophyll a/b-binding protein 2, chloroplastic (257 aa).

A chloroplast-targeting transit peptide spans 1-43 (MASSLCASSAIAAISSPSFLGGKKLRLKKKLTVPAVSRPDASV). Trp55 is a chlorophyll b binding site. Chlorophyll a-binding residues include Phe75, Ser81, and Glu94. Residue Arg99 participates in chlorophyll b binding. Transmembrane regions (helical) follow at residues 100-120 (WAML…IGIL) and 133-153 (YFTD…WAEG). Chlorophyll b is bound by residues Glu152 and Arg155. Chlorophyll a contacts are provided by Lys208, Glu209, Asn212, Arg214, Gln226, and His241. A helical membrane pass occupies residues 215 to 235 (LAMLAVMGAWFQHIYTGTGPI).

Belongs to the light-harvesting chlorophyll a/b-binding (LHC) protein family. The LHC complex consists of chlorophyll a-b binding proteins. Red-emitting heterodimers with LHCA3 and LHCA5. Binds to carotenoids. Requires Binds at least 14 chlorophylls (8 Chl-a and 6 Chl-b) and carotenoids such as lutein and neoxanthin. as cofactor. Post-translationally, photoregulated by reversible phosphorylation of its threonine residues.

It localises to the plastid. The protein resides in the chloroplast thylakoid membrane. Its function is as follows. The light-harvesting complex (LHC) functions as a light receptor, it captures and delivers excitation energy to photosystems with which it is closely associated, here photosystem I. The sequence is that of Photosystem I chlorophyll a/b-binding protein 2, chloroplastic from Arabidopsis thaliana (Mouse-ear cress).